Here is a 249-residue protein sequence, read N- to C-terminus: 3-deoxy-manno-octulosonate cytidylyltransferase (249 aa).

Belongs to the KdsB family.

The protein localises to the cytoplasm. It catalyses the reaction 3-deoxy-alpha-D-manno-oct-2-ulosonate + CTP = CMP-3-deoxy-beta-D-manno-octulosonate + diphosphate. The protein operates within nucleotide-sugar biosynthesis; CMP-3-deoxy-D-manno-octulosonate biosynthesis; CMP-3-deoxy-D-manno-octulosonate from 3-deoxy-D-manno-octulosonate and CTP: step 1/1. It participates in bacterial outer membrane biogenesis; lipopolysaccharide biosynthesis. Its function is as follows. Activates KDO (a required 8-carbon sugar) for incorporation into bacterial lipopolysaccharide in Gram-negative bacteria. This is 3-deoxy-manno-octulosonate cytidylyltransferase from Coxiella burnetii (strain RSA 331 / Henzerling II).